The chain runs to 260 residues: Late transcription factor 1 (260 aa).

It belongs to the chordopoxvirinae VLTF-1 family. As to quaternary structure, interacts with the late transcription factors VLTF-2 and VLTF-3. Interacts with the late transcription elongation factor VLTF-4. Interacts with itself.

Associates with RNA polymerase to initiate transcription from late gene promoters. The protein is Late transcription factor 1 (OPG093) of Homo sapiens (Human).